A 342-amino-acid polypeptide reads, in one-letter code: Ribosomal RNA small subunit methyltransferase C (342 aa).

Belongs to the methyltransferase superfamily. RsmC family. Monomer.

The protein resides in the cytoplasm. It carries out the reaction guanosine(1207) in 16S rRNA + S-adenosyl-L-methionine = N(2)-methylguanosine(1207) in 16S rRNA + S-adenosyl-L-homocysteine + H(+). Its function is as follows. Specifically methylates the guanine in position 1207 of 16S rRNA in the 30S particle. In Salmonella heidelberg (strain SL476), this protein is Ribosomal RNA small subunit methyltransferase C.